Reading from the N-terminus, the 540-residue chain is Chaperonin GroEL (540 aa).

ATP-binding positions include 29–32 (TLGP), 86–90 (DGTTT), G413, and D495.

This sequence belongs to the chaperonin (HSP60) family. In terms of assembly, forms a cylinder of 14 subunits composed of two heptameric rings stacked back-to-back. Interacts with the co-chaperonin GroES.

Its subcellular location is the cytoplasm. It catalyses the reaction ATP + H2O + a folded polypeptide = ADP + phosphate + an unfolded polypeptide.. In terms of biological role, together with its co-chaperonin GroES, plays an essential role in assisting protein folding. The GroEL-GroES system forms a nano-cage that allows encapsulation of the non-native substrate proteins and provides a physical environment optimized to promote and accelerate protein folding. This is Chaperonin GroEL from Caldanaerobacter subterraneus subsp. tengcongensis (strain DSM 15242 / JCM 11007 / NBRC 100824 / MB4) (Thermoanaerobacter tengcongensis).